We begin with the raw amino-acid sequence, 1401 residues long: MEEIPVKVAVRIRPLLCKEALHNHQVCVRVIPNSQQVIIGRDRVFTFDFVFGKNSTQDEVYNTCIKPLVLSLIEGYNATVFAYGQTGSGKTYTIGGGHIASVVEGQKGIIPRAIQEIFQSISEHPSIDFNVKVSYIEVYKEDLRDLLELETSMKDLHIREDEKGNTVIVGAKECHVESAGEVMSLLEMGNAARHTGTTQMNEHSSRSHAIFTISICQVHKNMEAAEDGSWYSPRHIVSKFHFVDLAGSERVTKTGNTGERFKESIQINSGLLALGNVISALGDPRRKSSHIPYRDAKITRLLKDSLGGSAKTVMITCVSPSSSNFDESLNSLKYANRARNIRNKPTVNFSPESDRIDEMEFEIKLLREALQSQQAGVSQTTQINREGSPDTNRIHSLEEQVAQLQGECLGYQCCVEEAFTFLVDLKDTVRLNEKQQHKLQEWFNMIQEVRKAVLTSFRGIGGTASLEEGPQHVTVLQLKRELKKCQCVLAADEVVFNQKELEVKELKNQVQMMVQENKGHAVSLKEAQKVNRLQNEKIIEQQLLVDQLSEELTKLNLSVTSSAKENCGDGPDARIPERRPYTVPFDTHLGHYIYIPSRQDSRKVHTSPPMYSLDRIFAGFRTRSQMLLGHIEEQDKVLHCQFSDNSDDEESEGQEKSGTRCRSRSWIQKPDSVCSLVELSDTQDETQKSDLENEDLKIDCLQESQELNLQKLKNSERILTEAKQKMRELTINIKMKEDLIKELIKTGNDAKSVSKQYSLKVTKLEHDAEQAKVELIETQKQLQELENKDLSDVAMKVKLQKEFRKKMDAAKLRVQVLQKKQQDSKKLASLSIQNEKRANELEQSVDHMKYQKIQLQRKLREENEKRKQLDAVIKRDQQKIKEIQLKTGQEEGLKPKAEDLDACNLKRRKGSFGSIDHLQKLDEQKKWLDEEVEKVLNQRQELEELEADLKKREAIVSKKEALLQEKSHLENKKLRSSQALNTDSLKISTRLNLLEQELSEKNVQLQTSTAEEKTKISEQVEVLQKEKDQLQKRRHNVDEKLKNGRVLSPEEEHVLFQLEEGIEALEAAIEYRNESIQNRQKSLRASFHNLSRGEANVLEKLACLSPVEIRTILFRYFNKVVNLREAERKQQLYNEEMKMKVLERDNMVRELESALDHLKLQCDRRLTLQQKEHEQKMQLLLHHFKEQDGEGIMETFKTYEDKIQQLEKDLYFYKKTSRDHKKKLKELVGEAIRRQLAPSEYQEAGDGVLKPEGGGMLSEELKWASRPESMKLSGREREMDSSASSLRTQPNPQKLWEDIPELPPIHSSLAPPSGHMLGNENKTETDDNQFTKSHSRLSSQIQVVGNVGRLHGVTPVKLCRKELRQISALELSLRRSSLGVGIGSMAADSIEVSRKPRDLKT.

Positions proline 5 to isoleucine 341 constitute a Kinesin motor domain. An ATP-binding site is contributed by glycine 84–threonine 91. Coiled-coil stretches lie at residues glutamate 352–cysteine 413 and leucine 489–leucine 557. 5 positions are modified to phosphoserine: serine 643, serine 646, serine 672, serine 675, and serine 704. Positions serine 643–arginine 662 are disordered. 4 coiled-coil regions span residues glutamine 705–lysine 886, aspartate 916–glutamate 1070, asparagine 1118–alanine 1154, and glutamate 1190–aspartate 1219. Serine 999 carries the phosphoserine modification. Residues glutamate 1259 to aspartate 1280 show a composition bias toward basic and acidic residues. The tract at residues glutamate 1259 to lysine 1332 is disordered. Over residues serine 1281 to proline 1292 the composition is skewed to polar residues. Phosphoserine is present on residues serine 1367 and serine 1389.

It belongs to the TRAFAC class myosin-kinesin ATPase superfamily. Kinesin family. KIF27 subfamily. As to quaternary structure, interacts with STK36. As to expression, testis, pancreatic islet, germ cell tumors and Jurkat T-cells.

The protein resides in the cytoplasm. The protein localises to the cytoskeleton. It is found in the cell projection. Its subcellular location is the cilium. Plays an essential role in motile ciliogenesis. The protein is Kinesin-like protein KIF27 (KIF27) of Homo sapiens (Human).